The primary structure comprises 286 residues: ATP synthase gamma chain (286 aa).

It belongs to the ATPase gamma chain family. As to quaternary structure, F-type ATPases have 2 components, CF(1) - the catalytic core - and CF(0) - the membrane proton channel. CF(1) has five subunits: alpha(3), beta(3), gamma(1), delta(1), epsilon(1). CF(0) has three main subunits: a, b and c.

The protein localises to the cell inner membrane. Functionally, produces ATP from ADP in the presence of a proton gradient across the membrane. The gamma chain is believed to be important in regulating ATPase activity and the flow of protons through the CF(0) complex. In Pseudoalteromonas translucida (strain TAC 125), this protein is ATP synthase gamma chain.